Consider the following 124-residue polypeptide: Small ribosomal subunit protein uS12 (124 aa).

The tract at residues 1–25 (MATINQLVRKPRQATTYKSASPALD) is disordered. Position 89 is a 3-methylthioaspartic acid (Asp-89).

It belongs to the universal ribosomal protein uS12 family. Part of the 30S ribosomal subunit. Contacts proteins S8 and S17. May interact with IF1 in the 30S initiation complex.

Functionally, with S4 and S5 plays an important role in translational accuracy. Its function is as follows. Interacts with and stabilizes bases of the 16S rRNA that are involved in tRNA selection in the A site and with the mRNA backbone. Located at the interface of the 30S and 50S subunits, it traverses the body of the 30S subunit contacting proteins on the other side and probably holding the rRNA structure together. The combined cluster of proteins S8, S12 and S17 appears to hold together the shoulder and platform of the 30S subunit. The sequence is that of Small ribosomal subunit protein uS12 from Xanthomonas campestris pv. campestris (strain 8004).